A 640-amino-acid polypeptide reads, in one-letter code: Tyrosine--tRNA ligase, mitochondrial (640 aa).

Y100 contacts L-tyrosine. An ATP-binding site is contributed by D104. Residues 105–114 carry the 'HIGH' region motif; it reads PTAPSLHIGH. 5 residues coordinate L-tyrosine: D144, Y248, Q252, D255, and Q274. A 'KMSKS' region motif is present at residues 322-326; that stretch reads KFGKS. Position 325 (K325) interacts with ATP.

The protein belongs to the class-I aminoacyl-tRNA synthetase family.

It localises to the mitochondrion matrix. It catalyses the reaction tRNA(Tyr) + L-tyrosine + ATP = L-tyrosyl-tRNA(Tyr) + AMP + diphosphate + H(+). In terms of biological role, has both an aminoacyl-tRNA synthetase activity and is involved in the splicing of group I introns. This is Tyrosine--tRNA ligase, mitochondrial (YTS1) from Podospora anserina (Pleurage anserina).